Here is a 181-residue protein sequence, read N- to C-terminus: Malignant T-cell-amplified sequence 1-A (181 aa).

The PUA domain occupies L92–N171.

The protein belongs to the MCTS1 family.

It localises to the cytoplasm. Functionally, plays a role as translation enhancer and involved in cell cycle regulation. The sequence is that of Malignant T-cell-amplified sequence 1-A (mcts1-a) from Xenopus laevis (African clawed frog).